The primary structure comprises 267 residues: Myxobacterial hemagglutinin (267 aa).

Tandem repeats lie at residues 1-66 (MAAY…GTLS), 67-133 (SANN…SEVT), 134-200 (DGDT…GTLT), and 201-267 (SPDT…ARLG). Residues 1–267 (MAAYLVQNQW…GPIGFRARLG (267 aa)) are 4 X 65 AA tandem repeats.

Belongs to the bacterial lectin family.

In terms of biological role, this lectin might have a role in the differentiation of cells. The protein is Myxobacterial hemagglutinin (mbhA) of Myxococcus xanthus.